We begin with the raw amino-acid sequence, 122 residues long: Large ribosomal subunit protein uL14 (122 aa).

It belongs to the universal ribosomal protein uL14 family. Part of the 50S ribosomal subunit. Forms a cluster with proteins L3 and L19. In the 70S ribosome, L14 and L19 interact and together make contacts with the 16S rRNA in bridges B5 and B8.

In terms of biological role, binds to 23S rRNA. Forms part of two intersubunit bridges in the 70S ribosome. The sequence is that of Large ribosomal subunit protein uL14 from Christiangramia forsetii (strain DSM 17595 / CGMCC 1.15422 / KT0803) (Gramella forsetii).